A 135-amino-acid polypeptide reads, in one-letter code: Large ribosomal subunit protein bL12c (135 aa).

The protein belongs to the bacterial ribosomal protein bL12 family. Homodimer. Part of the ribosomal stalk of the 50S ribosomal subunit. Forms a multimeric L10(L12)X complex, where L10 forms an elongated spine to which 2 to 4 L12 dimers bind in a sequential fashion. Binds GTP-bound translation factors.

The protein localises to the plastid. The protein resides in the chloroplast. Functionally, forms part of the ribosomal stalk which helps the ribosome interact with GTP-bound translation factors. Is thus essential for accurate translation. In Chara vulgaris (Common stonewort), this protein is Large ribosomal subunit protein bL12c.